The chain runs to 257 residues: Putative hydro-lyase YcsI (257 aa).

Belongs to the D-glutamate cyclase family.

This is Putative hydro-lyase YcsI (ycsI) from Bacillus subtilis (strain 168).